We begin with the raw amino-acid sequence, 761 residues long: Membrane protein of ER body-like protein (761 aa).

Disordered stretches follow at residues 1 to 85 and 120 to 162; these read MGSA…GEHT and GSES…RSRE. Residues 22–31 are compositionally biased toward acidic residues; the sequence is EVEEDDEQIV. A compositionally biased stretch (low complexity) spans 48-65; sequence VDSSTITNTSSSSSSSFS. Positions 74-85 are enriched in basic and acidic residues; that stretch reads PDFHSNGDGEHT. Residues 136-154 are compositionally biased toward polar residues; sequence TADLNGEQTQLEPENGSTS. Residues 186 to 206 are a coiled coil; the sequence is IEEEVDFEDVEYHDVENMMDK. 2 disordered regions span residues 338 to 374 and 416 to 448; these read SSSVLEANPPPRESIVPVVNPSRGNLSPMRKDTTGSA and QTQQKIDNDDSSTADGNHTSDKGRLSPIQPSHG. The span at 416–432 shows a compositional bias: polar residues; that stretch reads QTQQKIDNDDSSTADGN. 5 helical membrane-spanning segments follow: residues 549 to 569, 573 to 593, 640 to 660, 670 to 690, and 702 to 722; these read IVYGGLLEAITSLGVISSAAG, SMLNILVLGLANLLGGLILII, VAILSFIITGILPPVVYYFSF, VASVFGASLFCIVLLAIAKAH, and ILYYGSIAVSVSGISYVVGNF.

The protein belongs to the CCC1 family.

Its subcellular location is the endoplasmic reticulum membrane. Its function is as follows. Not essential for the accumulation of ER body components, including PYK10. The protein is Membrane protein of ER body-like protein (MEBL) of Arabidopsis thaliana (Mouse-ear cress).